We begin with the raw amino-acid sequence, 273 residues long: MAVSSENVKLLREMTGAGMLDCKKALEEANGDIDKAKEILRIKGLAKADKKASRETKEGLIVAKSTPSKGAMVELACETDFVARNGSFKELANKILDYVLENVGDTKGESRDSSILQGKIDGITIEELLKEAIAKIGENIQLKRYCVVEGPNFSYIHGGGRIGVLLSYEGDNLDVVKDVALQIAAMRPEFLSPETVPQDVIEREKAIYMEQAKKEGKPENMLEKIAEGKLKKFYEEKTLLHQKFIKDEKKTIQDYTKANNVTIKGFCRFEIGT.

The tract at residues 79-82 (TDFV) is involved in Mg(2+) ion dislocation from EF-Tu.

It belongs to the EF-Ts family.

Its subcellular location is the cytoplasm. Its function is as follows. Associates with the EF-Tu.GDP complex and induces the exchange of GDP to GTP. It remains bound to the aminoacyl-tRNA.EF-Tu.GTP complex up to the GTP hydrolysis stage on the ribosome. This chain is Elongation factor Ts, found in Hydrogenobaculum sp. (strain Y04AAS1).